A 579-amino-acid chain; its full sequence is Rop guanine nucleotide exchange factor 6 (579 aa).

Low complexity predominate over residues 31–61; it reads ESTTDSSLSSSSSGVGSSSGRSSVAERSVSS. The disordered stretch occupies residues 31-89; that stretch reads ESTTDSSLSSSSSGVGSSSGRSSVAERSVSSPPTKSQILGWPLGQGSWRKSSGKMKKKT. In terms of domain architecture, PRONE spans 98-479; it reads FKRVGTETSE…DISKDDGDGD (382 aa).

Functionally, guanine-nucleotide exchange factor (GEF) that acts as an activator of Rop (Rho of plants) GTPases by promoting the exchange of GDP for GTP. The sequence is that of Rop guanine nucleotide exchange factor 6 (ROPGEF6) from Arabidopsis thaliana (Mouse-ear cress).